A 173-amino-acid chain; its full sequence is MSKPKYPFEKRLEVVNHYFTTDDGYRIISARFGVPRTQVRTWVALYEKHGEKGLIPKPKGVSADPELRIKVVKAVIEQHMSLNQAAAHFMLAGSGSVARWLKVYEERGEAGLRALKIGTKRNIAISVDPEKAASALELSKDRRIEDLERQVRFLETRLMYLKKLKALAHPTKK.

This sequence belongs to the IS150/IS1296 orfA family.

This is Insertion element IS150 protein InsJ (insJ) from Escherichia coli (strain K12).